Here is a 552-residue protein sequence, read N- to C-terminus: CCR4-NOT transcription complex subunit 6 (552 aa).

LRR repeat units lie at residues 52–73, 75–96, 98–120, and 121–143; these read HLTA…IAKL, NLVY…LGNM, SLRE…GKLF, and QLQT…CLEP. The segment at 153–552 is nuclease domain; that stretch reads LLDNLSVSTE…VNGIHLPGRR (400 aa). Glu235 serves as a coordination point for Mg(2+). Glu235, Glu271, His356, and Pro361 together coordinate substrate. Mg(2+) is bound at residue Asp407. The active-site Proton donor/acceptor is Asp407. Asn409, Asn476, and Phe481 together coordinate substrate.

The protein belongs to the CCR4/nocturin family. Subunit of the CCR4-NOT core complex. It depends on Mg(2+) as a cofactor.

The protein resides in the cytoplasm. Its subcellular location is the nucleus. The enzyme catalyses Exonucleolytic cleavage of poly(A) to 5'-AMP.. In terms of biological role, poly(A) nuclease involved in mRNA decay. Has 3'-5' RNase activity. The CCR4-NOT complex functions as a general transcription regulation complex. Enhances ligand-dependent transcriptional activity of nuclear hormone receptors. This chain is CCR4-NOT transcription complex subunit 6 (cnot6), found in Xenopus laevis (African clawed frog).